The chain runs to 278 residues: Chitosanase (278 aa).

The N-terminal stretch at 1–41 (MRLKHPTARLALAALLVAVPRSVAAAGTVHAAPAPAGATRL) is a signal peptide. Residue Glu63 is the Proton donor of the active site. The active-site Nucleophile is the Asp81.

It belongs to the glycosyl hydrolase 46 family.

The protein localises to the secreted. It catalyses the reaction Endohydrolysis of beta-(1-&gt;4)-linkages between D-glucosamine residues in a partly acetylated chitosan.. Its function is as follows. Aids in the defense against invading fungal pathogens by degrading their cell wall chitosan. This Nocardioides sp. (strain N106) protein is Chitosanase (csn).